The following is a 258-amino-acid chain: Type III pantothenate kinase (258 aa).

Position 6–13 (6–13 (DVGNTNTV)) interacts with ATP. Substrate contacts are provided by residues Y100 and 107–110 (GADR). Catalysis depends on D109, which acts as the Proton acceptor. Residue D129 participates in K(+) binding. T132 contacts ATP. T184 provides a ligand contact to substrate.

It belongs to the type III pantothenate kinase family. In terms of assembly, homodimer. It depends on NH4(+) as a cofactor. K(+) is required as a cofactor.

It is found in the cytoplasm. The catalysed reaction is (R)-pantothenate + ATP = (R)-4'-phosphopantothenate + ADP + H(+). It participates in cofactor biosynthesis; coenzyme A biosynthesis; CoA from (R)-pantothenate: step 1/5. Its function is as follows. Catalyzes the phosphorylation of pantothenate (Pan), the first step in CoA biosynthesis. In Geobacillus sp. (strain WCH70), this protein is Type III pantothenate kinase.